A 491-amino-acid chain; its full sequence is CRM-domain containing factor CFM9, mitochondrial (491 aa).

A mitochondrion-targeting transit peptide spans 1–25 (MNQVFKGWSRGMSTSRGRSMRSKVE). Positions 1–34 (MNQVFKGWSRGMSTSRGRSMRSKVESRMRKESGK) are disordered. The span at 22-34 (SKVESRMRKESGK) shows a compositional bias: basic and acidic residues. Positions 90-187 (ELFTSEQVQA…RNYRQPKNLI (98 aa)) constitute a CRM domain. The segment covering 255–265 (PYVFHGDKQSE) has biased composition (basic and acidic residues). 2 disordered regions span residues 255–287 (PYVF…DQEE) and 328–491 (RSRT…WDSD). The segment covering 277–287 (EPGDEDSDQEE) has biased composition (acidic residues). Residues 345-359 (RRNDRDTHSQRRPND) are compositionally biased toward basic and acidic residues. Residues 360–375 (SDDDDDDGELDSEDDE) show a composition bias toward acidic residues. The span at 392–416 (RPREDFKRRSPDPRPRPRAQVRSDD) shows a compositional bias: basic and acidic residues. The segment covering 453 to 478 (TVSASSSKQSRFRNNSSRDGINNSKS) has biased composition (polar residues).

As to expression, highly expressed in roots and meristemic regions of young seedlings. Expressed at low levels in stems, trichomes and stigma.

Its subcellular location is the mitochondrion. Involved in the splicing of group II introns in mitochondria. Required for the splicing of mitochondrial introns found in nad1, nad2, nad4, nad5, nad7, rps3 and cox2 genes. Splicing of mitochondrial introns is crucial for mitochondrial biogenesis and function, plant growth and development, and plant response to abiotic stresses. In Arabidopsis thaliana (Mouse-ear cress), this protein is CRM-domain containing factor CFM9, mitochondrial.